An 809-amino-acid polypeptide reads, in one-letter code: Putative zinc metalloprotease TRE2 (809 aa).

2 stretches are compositionally biased toward polar residues: residues 1–12 (MRSSYQPVSTTN) and 20–30 (PTASSSHNLLM). Residues 1-66 (MRSSYQPVST…PSYEFDIEDP (66 aa)) are disordered. Residues 1-125 (MRSSYQPVST…KIGNPFILRR (125 aa)) are Cytoplasmic-facing. Residues 37 to 50 (SPPSSNDNSIETNI) show a composition bias toward low complexity. Residues 126-146 (FFYIIFMSFIAYYVLSSGYLF) form a helical; Signal-anchor for type II membrane protein membrane-spanning segment. The Extracellular portion of the chain corresponds to 147-809 (NEKASGSKGM…VEETNDIGYK (663 aa)). Residue Asn-228 is glycosylated (N-linked (GlcNAc...) asparagine). The PA domain occupies 255–349 (SNGKLSKVSL…STGDASGLNW (95 aa)). N-linked (GlcNAc...) asparagine glycans are attached at residues Asn-669 and Asn-736.

This sequence belongs to the peptidase M28 family. M28B subfamily.

The protein localises to the membrane. The polypeptide is Putative zinc metalloprotease TRE2 (TRE2) (Saccharomyces cerevisiae (strain ATCC 204508 / S288c) (Baker's yeast)).